The following is a 300-amino-acid chain: Tyrosine recombinase XerC (300 aa).

Residues 2–88 (TQEGKLEQQF…SLRSFYTFLL (87 aa)) enclose the Core-binding (CB) domain. The Tyr recombinase domain maps to 109-294 (RLPKFFYSEE…TKEHLKSTYM (186 aa)). Residues R150, K174, H246, R249, and H272 contribute to the active site. Residue Y281 is the O-(3'-phospho-DNA)-tyrosine intermediate of the active site.

Belongs to the 'phage' integrase family. XerC subfamily. As to quaternary structure, forms a cyclic heterotetrameric complex composed of two molecules of XerC and two molecules of XerD.

The protein resides in the cytoplasm. Functionally, site-specific tyrosine recombinase, which acts by catalyzing the cutting and rejoining of the recombining DNA molecules. The XerC-XerD complex is essential to convert dimers of the bacterial chromosome into monomers to permit their segregation at cell division. It also contributes to the segregational stability of plasmids. The sequence is that of Tyrosine recombinase XerC from Listeria welshimeri serovar 6b (strain ATCC 35897 / DSM 20650 / CCUG 15529 / CIP 8149 / NCTC 11857 / SLCC 5334 / V8).